Reading from the N-terminus, the 236-residue chain is Thymidylate kinase (236 aa).

9–16 contributes to the ATP binding site; that stretch reads GPEGSGKS.

Belongs to the thymidylate kinase family.

The catalysed reaction is dTMP + ATP = dTDP + ADP. Functionally, phosphorylation of dTMP to form dTDP in both de novo and salvage pathways of dTTP synthesis. The polypeptide is Thymidylate kinase (Herpetosiphon aurantiacus (strain ATCC 23779 / DSM 785 / 114-95)).